Reading from the N-terminus, the 494-residue chain is Cytochrome P450 2G1 (494 aa).

Cysteine 439 serves as a coordination point for heme.

This sequence belongs to the cytochrome P450 family. Heme is required as a cofactor. Olfactory epithelium.

The protein localises to the endoplasmic reticulum membrane. Its subcellular location is the microsome membrane. The enzyme catalyses an organic molecule + reduced [NADPH--hemoprotein reductase] + O2 = an alcohol + oxidized [NADPH--hemoprotein reductase] + H2O + H(+). Functionally, cytochromes P450 are a group of heme-thiolate monooxygenases. This isozyme seems to be implicated in olfaction. The sequence is that of Cytochrome P450 2G1 (Cyp2g1) from Rattus norvegicus (Rat).